The sequence spans 250 residues: Probable syntaxin-8B (250 aa).

Residues 1-213 are Cytoplasmic-facing; sequence MGDYWLNEHD…NRRMETIKQN (213 aa). Residues 73–100 are a coiled coil; sequence EKELLRRKNKVESLISMKNQLNSTLDAA. Positions 148 to 210 constitute a t-SNARE coiled-coil homology domain; the sequence is QHIMREQDES…RNANRRMETI (63 aa). Residues 214–234 traverse the membrane as a helical; Anchor for type IV membrane protein segment; it reads AGSTCMIVCIVILIILIVVLI. The Vesicular segment spans residues 235–250; it reads ATDSGCKIYNDPKHCP.

The protein belongs to the syntaxin family.

Its subcellular location is the membrane. The sequence is that of Probable syntaxin-8B (syn8B) from Dictyostelium discoideum (Social amoeba).